Here is a 149-residue protein sequence, read N- to C-terminus: D-aminoacyl-tRNA deacylase (149 aa).

Residues G137–P138 carry the Gly-cisPro motif, important for rejection of L-amino acids motif.

Belongs to the DTD family. In terms of assembly, homodimer.

The protein resides in the cytoplasm. It carries out the reaction glycyl-tRNA(Ala) + H2O = tRNA(Ala) + glycine + H(+). The catalysed reaction is a D-aminoacyl-tRNA + H2O = a tRNA + a D-alpha-amino acid + H(+). Its function is as follows. An aminoacyl-tRNA editing enzyme that deacylates mischarged D-aminoacyl-tRNAs. Also deacylates mischarged glycyl-tRNA(Ala), protecting cells against glycine mischarging by AlaRS. Acts via tRNA-based rather than protein-based catalysis; rejects L-amino acids rather than detecting D-amino acids in the active site. By recycling D-aminoacyl-tRNA to D-amino acids and free tRNA molecules, this enzyme counteracts the toxicity associated with the formation of D-aminoacyl-tRNA entities in vivo and helps enforce protein L-homochirality. In Caldicellulosiruptor bescii (strain ATCC BAA-1888 / DSM 6725 / KCTC 15123 / Z-1320) (Anaerocellum thermophilum), this protein is D-aminoacyl-tRNA deacylase.